Here is a 435-residue protein sequence, read N- to C-terminus: tRNA modification GTPase MnmE (435 aa).

(6S)-5-formyl-5,6,7,8-tetrahydrofolate-binding residues include arginine 20, glutamate 77, and lysine 117. One can recognise a TrmE-type G domain in the interval 214–359; sequence GIKVVIVGVP…FLKEIESFCL (146 aa). Residues 224-229, 243-249, and 268-271 each bind GTP; these read NSGKSS, TEEEGTT, and DTAG. Mg(2+) is bound by residues serine 228 and threonine 249. Lysine 435 is a binding site for (6S)-5-formyl-5,6,7,8-tetrahydrofolate.

It belongs to the TRAFAC class TrmE-Era-EngA-EngB-Septin-like GTPase superfamily. TrmE GTPase family. As to quaternary structure, homodimer. Heterotetramer of two MnmE and two MnmG subunits. Requires K(+) as cofactor.

The protein resides in the cytoplasm. Its function is as follows. Exhibits a very high intrinsic GTPase hydrolysis rate. Involved in the addition of a carboxymethylaminomethyl (cmnm) group at the wobble position (U34) of certain tRNAs, forming tRNA-cmnm(5)s(2)U34. In Bartonella bacilliformis (strain ATCC 35685 / KC583 / Herrer 020/F12,63), this protein is tRNA modification GTPase MnmE.